Reading from the N-terminus, the 788-residue chain is Protein translocase subunit SecA 2 (788 aa).

Residues glutamine 86, 104–108 (GEGKT), and aspartate 493 each bind ATP.

Belongs to the SecA family. In terms of assembly, monomer and homodimer. Part of the essential Sec protein translocation apparatus which comprises SecA, SecYEG and auxiliary proteins SecDF. Other proteins may also be involved.

The protein resides in the cell membrane. Its subcellular location is the cytoplasm. It catalyses the reaction ATP + H2O + cellular proteinSide 1 = ADP + phosphate + cellular proteinSide 2.. Functionally, part of the Sec protein translocase complex. Interacts with the SecYEG preprotein conducting channel. Has a central role in coupling the hydrolysis of ATP to the transfer of proteins into and across the cell membrane, serving as an ATP-driven molecular motor driving the stepwise translocation of polypeptide chains across the membrane. The sequence is that of Protein translocase subunit SecA 2 from Bacillus cereus (strain ZK / E33L).